A 148-amino-acid chain; its full sequence is Large ribosomal subunit protein uL15 (148 aa).

A disordered region spans residues 1 to 57; that stretch reads MRLHDLYPFPEERKTRKRVGRGSGSGLGCTSGKGNKGQNARAGGGVRPGFEGGQMPL. Gly residues-rich tracts occupy residues 21–35 and 42–52; these read RGSGSGLGCTSGKGN and AGGGVRPGFEG.

The protein belongs to the universal ribosomal protein uL15 family. As to quaternary structure, part of the 50S ribosomal subunit.

Its function is as follows. Binds to the 23S rRNA. The polypeptide is Large ribosomal subunit protein uL15 (Nitratidesulfovibrio vulgaris (strain ATCC 29579 / DSM 644 / CCUG 34227 / NCIMB 8303 / VKM B-1760 / Hildenborough) (Desulfovibrio vulgaris)).